The following is a 500-amino-acid chain: Probable cation transporter HKT1;4 (500 aa).

At 1-12 (MPTSRRALAGGA) the chain is on the cytoplasmic side. Transmembrane regions (helical) follow at residues 13 to 33 (LSMH…LLGV) and 74 to 94 (LVVL…LVGL). At 95–156 (ASKWSKLRSD…ADTLRHNAVR (62 aa)) the chain is on the cytoplasmic side. The segment at 121-145 (ADIDGGDVENPTSSGEEAASRRRPM) is disordered. 2 consecutive transmembrane segments (helical) span residues 157–177 (ALFY…AVAV) and 239–259 (VLAG…AAAA). Over 260–290 (ATRREELVEMAREGGRAAAAGYAHLMPARRC) the chain is Cytoplasmic. 2 consecutive transmembrane segments (helical) span residues 291–311 (WMLA…VCGM) and 346–366 (LSIL…LPPY). The Cytoplasmic segment spans residues 367 to 390 (TTWFPFEENSTTKDSNAENQGIRL). The next 2 membrane-spanning stretches (helical) occupy residues 391–411 (LEST…AICI) and 464–484 (GFVG…MFFG). Topologically, residues 485 to 500 (RLKKFSMKGGKAWKLS) are cytoplasmic.

It belongs to the TrkH potassium transport family. HKT (TC 2.A.38.3) subfamily.

The protein localises to the membrane. Probable cation transporter. May be involved in regulation of potassium-sodium homeostasis. This Oryza sativa subsp. japonica (Rice) protein is Probable cation transporter HKT1;4.